A 297-amino-acid chain; its full sequence is Homoserine kinase (297 aa).

Residue 79-89 (PIARGLGSSGA) participates in ATP binding.

This sequence belongs to the GHMP kinase family. Homoserine kinase subfamily.

The protein localises to the cytoplasm. The catalysed reaction is L-homoserine + ATP = O-phospho-L-homoserine + ADP + H(+). Its pathway is amino-acid biosynthesis; L-threonine biosynthesis; L-threonine from L-aspartate: step 4/5. In terms of biological role, catalyzes the ATP-dependent phosphorylation of L-homoserine to L-homoserine phosphate. This is Homoserine kinase from Pyrobaculum aerophilum (strain ATCC 51768 / DSM 7523 / JCM 9630 / CIP 104966 / NBRC 100827 / IM2).